The following is a 369-amino-acid chain: Phospho-N-acetylmuramoyl-pentapeptide-transferase (369 aa).

Transmembrane regions (helical) follow at residues 2-22 (IPLL…TQLF), 55-75 (AVVI…SWWI), 82-102 (PSVS…VGFL), 120-140 (AKLI…INFA), 163-183 (LAFA…NLII), 196-216 (LDGL…LIGI), 240-260 (PLDL…FLWW), 267-287 (IFMG…FAIL), 292-312 (ILLA…ILQV), and 349-369 (ILGG…WVVF).

It belongs to the glycosyltransferase 4 family. MraY subfamily. It depends on Mg(2+) as a cofactor.

It is found in the cell membrane. It catalyses the reaction UDP-N-acetyl-alpha-D-muramoyl-L-alanyl-gamma-D-glutamyl-meso-2,6-diaminopimeloyl-D-alanyl-D-alanine + di-trans,octa-cis-undecaprenyl phosphate = di-trans,octa-cis-undecaprenyl diphospho-N-acetyl-alpha-D-muramoyl-L-alanyl-D-glutamyl-meso-2,6-diaminopimeloyl-D-alanyl-D-alanine + UMP. The protein operates within cell wall biogenesis; peptidoglycan biosynthesis. Catalyzes the initial step of the lipid cycle reactions in the biosynthesis of the cell wall peptidoglycan: transfers peptidoglycan precursor phospho-MurNAc-pentapeptide from UDP-MurNAc-pentapeptide onto the lipid carrier undecaprenyl phosphate, yielding undecaprenyl-pyrophosphoryl-MurNAc-pentapeptide, known as lipid I. This Renibacterium salmoninarum (strain ATCC 33209 / DSM 20767 / JCM 11484 / NBRC 15589 / NCIMB 2235) protein is Phospho-N-acetylmuramoyl-pentapeptide-transferase.